A 579-amino-acid polypeptide reads, in one-letter code: Laccase-4 (579 aa).

Positions 1-28 are cleaved as a signal peptide; it reads MTMAISSALPSPLLLAASLLLLIVQAQG. Plastocyanin-like domains lie at 36–152 and 162–316; these read NVQM…PKLG and KEVP…YENP. Asn41 and Asn82 each carry an N-linked (GlcNAc...) asparagine glycan. Residues His86 and His88 each contribute to the Cu cation site. Residue Asn118 is glycosylated (N-linked (GlcNAc...) asparagine). His131 and His133 together coordinate Cu cation. 12 N-linked (GlcNAc...) asparagine glycosylation sites follow: Asn191, Asn207, Asn243, Asn304, Asn340, Asn347, Asn386, Asn393, Asn403, Asn439, Asn446, and Asn462. One can recognise a Plastocyanin-like 3 domain in the interval 429–563; sequence DFPVAPLSPF…RMAWLVLDGS (135 aa). Cu cation-binding residues include His480, His483, His485, His542, Cys543, His544, and His548.

Belongs to the multicopper oxidase family. It depends on Cu cation as a cofactor.

It is found in the secreted. It localises to the extracellular space. Its subcellular location is the apoplast. It catalyses the reaction 4 hydroquinone + O2 = 4 benzosemiquinone + 2 H2O. Functionally, lignin degradation and detoxification of lignin-derived products. In Oryza sativa subsp. japonica (Rice), this protein is Laccase-4 (LAC4).